The sequence spans 393 residues: MTVPSTRKDLMIVNMGPHHPSMHGVLRLIVTLDGEDVIDCEPILGYLHRGMEKIAENRTIIQYLPYVTRWDYLATMFTEAITVNAPEQLGNIQVPKRASYIRVIMLELSRIASHLLWLGPFMADIGAQTPFFYIFRERELIYDLFEAATGMRMMHNFFRIGGVAADLPHGWIDKCLDFCDYFLTGIAEYQKLITRNPIFLERVEGVGIIGGEEAINWGLSGPMLRASGIEWDLRKVDHYECYDEFDWEVQWQKEGDSLARYLVRISEMTESIKIIQQALEGIPGGPYENLEIRRFDRVKDTVWNEFDYRFISKKPSPTFELSKQELYARVEAPKGELGIFLIGDKGVFPWRYKIRPPGFINLQILPQLVKRMKLADIMTILGSIDIIMGEVDR.

Belongs to the complex I 49 kDa subunit family. NDH is composed of at least 16 different subunits, 5 of which are encoded in the nucleus.

The protein localises to the plastid. Its subcellular location is the chloroplast thylakoid membrane. It catalyses the reaction a plastoquinone + NADH + (n+1) H(+)(in) = a plastoquinol + NAD(+) + n H(+)(out). The enzyme catalyses a plastoquinone + NADPH + (n+1) H(+)(in) = a plastoquinol + NADP(+) + n H(+)(out). Functionally, NDH shuttles electrons from NAD(P)H:plastoquinone, via FMN and iron-sulfur (Fe-S) centers, to quinones in the photosynthetic chain and possibly in a chloroplast respiratory chain. The immediate electron acceptor for the enzyme in this species is believed to be plastoquinone. Couples the redox reaction to proton translocation, and thus conserves the redox energy in a proton gradient. This is NAD(P)H-quinone oxidoreductase subunit H, chloroplastic from Helianthus annuus (Common sunflower).